We begin with the raw amino-acid sequence, 879 residues long: Alanine--tRNA ligase 1 (879 aa).

Positions 566, 570, 668, and 672 each coordinate Zn(2+).

It belongs to the class-II aminoacyl-tRNA synthetase family. Zn(2+) serves as cofactor.

The protein localises to the cytoplasm. It catalyses the reaction tRNA(Ala) + L-alanine + ATP = L-alanyl-tRNA(Ala) + AMP + diphosphate. In terms of biological role, catalyzes the attachment of alanine to tRNA(Ala) in a two-step reaction: alanine is first activated by ATP to form Ala-AMP and then transferred to the acceptor end of tRNA(Ala). Also edits incorrectly charged Ser-tRNA(Ala) and Gly-tRNA(Ala) via its editing domain. In Lachnoclostridium phytofermentans (strain ATCC 700394 / DSM 18823 / ISDg) (Clostridium phytofermentans), this protein is Alanine--tRNA ligase 1.